The chain runs to 372 residues: Neuropeptide S receptor (372 aa).

Topologically, residues 1–52 (MPANLTEGSFHANQTVPMLDSSPVACTEIVTFTEALEAEEWGSFYSSFKTEQ) are extracellular. Asn4 and Asn13 each carry an N-linked (GlcNAc...) asparagine glycan. Residues 53–73 (LITLWVLFVFTIVGNSVVLFS) traverse the membrane as a helical segment. Residues 74–82 (TWRRKRKSR) are Cytoplasmic-facing. The chain crosses the membrane as a helical span at residues 83-103 (MTFFVTQLAITDSFTGLINIL). The Extracellular segment spans residues 104–122 (TDIIWRFTGDFMAPDLVCR). Cys121 and Cys198 are oxidised to a cystine. Residues 123-143 (IVRYLQVVLLYASTYVLVSLS) form a helical membrane-spanning segment. Residues 144–165 (IDRYHAIVYPMKFLQGAEKQAK) are Cytoplasmic-facing. The helical transmembrane segment at 166–186 (VLIGIAWSLSFLFSIPTLIIF) threads the bilayer. The Extracellular segment spans residues 187–213 (GKRTLSNGEVQCWALWPDDSYWTPYMT). Residues 214–234 (IVAFLVYFIPLTIISVIYGLV) traverse the membrane as a helical segment. At 235–276 (IRTIWIKSKAHETVISNCSDGELCCSYNRGLISKAKIKAIKY) the chain is on the cytoplasmic side. The chain crosses the membrane as a helical span at residues 277–297 (SIVIILAFICCWSPYFLFDML). Residues 298-313 (DNFNLLPDTKERFYAS) lie on the Extracellular side of the membrane. The chain crosses the membrane as a helical span at residues 314 to 334 (VIIQNLPALNSAINPLIYCIF). The Cytoplasmic segment spans residues 335 to 372 (SGSLCSPCKVQRSQDSRMTYRERSERHEMQILSKPEFI).

The protein belongs to the G-protein coupled receptor 1 family. Vasopressin/oxytocin receptor subfamily.

The protein localises to the cell membrane. Its function is as follows. G-protein coupled receptor for neuropeptide S (NPS). Promotes mobilization of intracellular Ca(2+) stores. Inhibits cell growth in response to NPS binding. Involved in pathogenesis of asthma and other IgE-mediated diseases. The chain is Neuropeptide S receptor (Npsr1) from Rattus norvegicus (Rat).